The following is a 159-amino-acid chain: Phosphopantetheine adenylyltransferase (159 aa).

Thr9 lines the substrate pocket. ATP is bound by residues 9–10 (TF) and His17. 3 residues coordinate substrate: Lys41, Leu73, and Arg87. Residues 88–90 (GLR), Glu98, and 123–129 (YSFISST) each bind ATP.

This sequence belongs to the bacterial CoaD family. As to quaternary structure, homohexamer. Mg(2+) is required as a cofactor.

The protein resides in the cytoplasm. The enzyme catalyses (R)-4'-phosphopantetheine + ATP + H(+) = 3'-dephospho-CoA + diphosphate. The protein operates within cofactor biosynthesis; coenzyme A biosynthesis; CoA from (R)-pantothenate: step 4/5. Reversibly transfers an adenylyl group from ATP to 4'-phosphopantetheine, yielding dephospho-CoA (dPCoA) and pyrophosphate. The polypeptide is Phosphopantetheine adenylyltransferase (Pseudomonas fluorescens (strain ATCC BAA-477 / NRRL B-23932 / Pf-5)).